We begin with the raw amino-acid sequence, 543 residues long: Acrosin-binding protein (543 aa).

The first 25 residues, 1–25 (MGQPAAGSILTLLRVLLLPLGPALA), serve as a signal peptide directing secretion. The interval 26–106 (QDSPSAPTPG…ASWFESFCQF (81 aa)) is pro-ACR binding. Residues 26–276 (QDSPSAPTPG…DPHSFTARVR (251 aa)) constitute a propeptide, removed in mature form. The interval 187–239 (AGQEQAAGHKQEQGQEQHKQDPTQEHKQDDGQEQEEQEEEQEEEGKQEEGQSV) is disordered. Positions 193-216 (AGHKQEQGQEQHKQDPTQEHKQDD) are enriched in basic and acidic residues. Positions 217-232 (GQEQEEQEEEQEEEGK) are enriched in acidic residues. Positions 319–427 (LPHKEALLVL…TQAGTSESGR (109 aa)) are pro-ACR binding.

Binds proacrosin (ACR). Does not bind the mature form of ACR. The N-terminus is blocked. Post-translationally, phosphorylated on Tyr residues in capacitated sperm. In terms of processing, synthesized as a 60-kDa precursor, the 32-kDa mature form is post-translationally produced by the removal of the N-terminal half of the precursor during sperm maturation in the testis and/or epididymis. As to expression, specifically expressed in testis.

Its subcellular location is the secreted. The protein resides in the cytoplasmic vesicle. The protein localises to the secretory vesicle. It is found in the acrosome. Its function is as follows. Acrosomal protein that maintains proacrosin (pro-ACR) as an enzymatically inactive zymogen in the acrosome. Involved also in the acrosome formation. The sequence is that of Acrosin-binding protein (ACRBP) from Cavia porcellus (Guinea pig).